A 284-amino-acid polypeptide reads, in one-letter code: Bifunctional protein FolD (284 aa).

Residues 166-168 and Ile-232 each bind NADP(+); that span reads GAS.

Belongs to the tetrahydrofolate dehydrogenase/cyclohydrolase family. Homodimer.

The catalysed reaction is (6R)-5,10-methylene-5,6,7,8-tetrahydrofolate + NADP(+) = (6R)-5,10-methenyltetrahydrofolate + NADPH. It catalyses the reaction (6R)-5,10-methenyltetrahydrofolate + H2O = (6R)-10-formyltetrahydrofolate + H(+). It functions in the pathway one-carbon metabolism; tetrahydrofolate interconversion. In terms of biological role, catalyzes the oxidation of 5,10-methylenetetrahydrofolate to 5,10-methenyltetrahydrofolate and then the hydrolysis of 5,10-methenyltetrahydrofolate to 10-formyltetrahydrofolate. This chain is Bifunctional protein FolD, found in Shewanella frigidimarina (strain NCIMB 400).